A 307-amino-acid polypeptide reads, in one-letter code: Dihydroorotate dehydrogenase A (fumarate) (307 aa).

FMN is bound by residues serine 21 and 46–47 (KT). Substrate-binding positions include lysine 46, 70-74 (NSVGL), and asparagine 130. Residue asparagine 130 coordinates FMN. Cysteine 133 serves as the catalytic Nucleophile. Lysine 168 and isoleucine 194 together coordinate FMN. 195 to 196 (NT) is a substrate binding site. FMN-binding positions include glycine 220, 246–247 (GG), and 268–269 (GS).

This sequence belongs to the dihydroorotate dehydrogenase family. Type 1 subfamily. In terms of assembly, homodimer. Requires FMN as cofactor.

It is found in the cytoplasm. It catalyses the reaction (S)-dihydroorotate + fumarate = orotate + succinate. The protein operates within pyrimidine metabolism; UMP biosynthesis via de novo pathway. In terms of biological role, catalyzes the conversion of dihydroorotate to orotate with fumarate as the electron acceptor. The polypeptide is Dihydroorotate dehydrogenase A (fumarate) (pyrD) (Lactobacillus delbrueckii subsp. bulgaricus (strain ATCC BAA-365 / Lb-18)).